Here is a 1066-residue protein sequence, read N- to C-terminus: FHIP family protein GI14169 (1066 aa).

The span at 1–11 (MSWLRTSPLRQ) shows a compositional bias: polar residues. A disordered region spans residues 1-35 (MSWLRTSPLRQSLTRSGSSSGNGSSGTATTMRQRP). A compositionally biased stretch (low complexity) spans 12 to 30 (SLTRSGSSSGNGSSGTATT). Ser500 carries the post-translational modification Phosphoserine. Residues 651–682 (GIDVTTTTTASASDTDLEHNNNSSSISSGRRD) are disordered. Low complexity predominate over residues 655–678 (TTTTTASASDTDLEHNNNSSSISS). Ser820 is modified (phosphoserine). Disordered regions lie at residues 821-913 (PLHQ…GNSA) and 935-1007 (SGGE…TGNF). The span at 822 to 855 (LHQQLQHQQQHQQLAQTNSHTQQQQQQQQQQAQQ) shows a compositional bias: low complexity. The segment covering 856–874 (RSTYATLSAATPVQASPTS) has biased composition (polar residues). A compositionally biased stretch (low complexity) spans 890–913 (SRSITSMFSRRSTSSTPASNGNSA). Residues 947–971 (QDSTRGNTCETSLSTAPRQEPQTNV) show a composition bias toward polar residues. Positions 972–997 (GSSSNSSIGSSTQTLSGTHSSSTLHG) are enriched in low complexity.

It belongs to the FHIP family.

In Drosophila mojavensis (Fruit fly), this protein is FHIP family protein GI14169.